The chain runs to 93 residues: MKFELLNQVNLKKDHEIRIYSTCIGCTQCVRACPTDVLEMVPSTTCKAKQVVTVPRIEDCVGCKRCESACPTDFLSIRVYLGGETLRSMGLAY.

4Fe-4S ferredoxin-type domains are found at residues 13–43 (KDHE…MVPS) and 50–80 (QVVT…IRVY). Residues C23, C26, C29, C33, C60, C63, C66, and C70 each contribute to the [4Fe-4S] cluster site.

In terms of assembly, the eukaryotic PSI reaction center is composed of at least 11 subunits. [4Fe-4S] cluster serves as cofactor.

It localises to the plastid. The protein localises to the chloroplast thylakoid membrane. It catalyses the reaction reduced [plastocyanin] + hnu + oxidized [2Fe-2S]-[ferredoxin] = oxidized [plastocyanin] + reduced [2Fe-2S]-[ferredoxin]. Its function is as follows. Apoprotein for the two 4Fe-4S centers FA and FB of photosystem I (PSI); essential for photochemical activity. FB is the terminal electron acceptor of PSI, donating electrons to ferredoxin. The C-terminus interacts with PsaA/B/D and helps assemble the protein into the PSI complex. Required for binding of PsaD and PsaE to PSI. PSI is a plastocyanin-ferredoxin oxidoreductase, converting photonic excitation into a charge separation, which transfers an electron from the donor P700 chlorophyll pair to the spectroscopically characterized acceptors A0, A1, FX, FA and FB in turn. The chain is Photosystem I iron-sulfur center from Bigelowiella natans (Pedinomonas minutissima).